Here is a 210-residue protein sequence, read N- to C-terminus: Urease accessory protein UreF (210 aa).

The protein belongs to the UreF family. UreD, UreF and UreG form a complex that acts as a GTP-hydrolysis-dependent molecular chaperone, activating the urease apoprotein by helping to assemble the nickel containing metallocenter of UreC. The UreE protein probably delivers the nickel.

The protein resides in the cytoplasm. Required for maturation of urease via the functional incorporation of the urease nickel metallocenter. The polypeptide is Urease accessory protein UreF (Cereibacter sphaeroides (strain ATCC 17025 / ATH 2.4.3) (Rhodobacter sphaeroides)).